Consider the following 380-residue polypeptide: DNA replication and repair protein RecF (380 aa).

Residue 30-37 (GQNGQGKT) participates in ATP binding.

The protein belongs to the RecF family.

The protein resides in the cytoplasm. In terms of biological role, the RecF protein is involved in DNA metabolism; it is required for DNA replication and normal SOS inducibility. RecF binds preferentially to single-stranded, linear DNA. It also seems to bind ATP. The chain is DNA replication and repair protein RecF from Myxococcus xanthus (strain DK1622).